Consider the following 544-residue polypeptide: Membrane protein insertase YidC (544 aa).

A run of 5 helical transmembrane segments spans residues 13–33 (LSLF…SNIL), 343–363 (WGLS…PLTF), 409–429 (LGGC…YSLV), 461–481 (LYFV…FTQL), and 506–526 (MPIM…IYWI).

It belongs to the OXA1/ALB3/YidC family. Type 1 subfamily. In terms of assembly, interacts with the Sec translocase complex via SecD. Specifically interacts with transmembrane segments of nascent integral membrane proteins during membrane integration.

The protein localises to the cell inner membrane. Required for the insertion and/or proper folding and/or complex formation of integral membrane proteins into the membrane. Involved in integration of membrane proteins that insert both dependently and independently of the Sec translocase complex, as well as at least some lipoproteins. Aids folding of multispanning membrane proteins. The chain is Membrane protein insertase YidC from Borreliella burgdorferi (strain ATCC 35210 / DSM 4680 / CIP 102532 / B31) (Borrelia burgdorferi).